The sequence spans 179 residues: MAELATIARPYAEALFGVAEAGDIAAWSTLVQELAQVARLPDVLSIASSPKVSRAQISDLLLAAVKSPLKDNAQAKNLVQMLVDNHRLPLLPEIATQFEELKNAREGAADALIVSAFPLEGAQLDGLVASLERKFKRKLKPTVQVDSSLIGGVRVTVGDEVLDTSVRARLASMQTALTA.

This sequence belongs to the ATPase delta chain family. In terms of assembly, F-type ATPases have 2 components, F(1) - the catalytic core - and F(0) - the membrane proton channel. F(1) has five subunits: alpha(3), beta(3), gamma(1), delta(1), epsilon(1). F(0) has three main subunits: a(1), b(2) and c(10-14). The alpha and beta chains form an alternating ring which encloses part of the gamma chain. F(1) is attached to F(0) by a central stalk formed by the gamma and epsilon chains, while a peripheral stalk is formed by the delta and b chains.

It is found in the cell inner membrane. Its function is as follows. F(1)F(0) ATP synthase produces ATP from ADP in the presence of a proton or sodium gradient. F-type ATPases consist of two structural domains, F(1) containing the extramembraneous catalytic core and F(0) containing the membrane proton channel, linked together by a central stalk and a peripheral stalk. During catalysis, ATP synthesis in the catalytic domain of F(1) is coupled via a rotary mechanism of the central stalk subunits to proton translocation. In terms of biological role, this protein is part of the stalk that links CF(0) to CF(1). It either transmits conformational changes from CF(0) to CF(1) or is implicated in proton conduction. This Paraburkholderia phymatum (strain DSM 17167 / CIP 108236 / LMG 21445 / STM815) (Burkholderia phymatum) protein is ATP synthase subunit delta.